The chain runs to 735 residues: Muskelin (735 aa).

N-acetylalanine is present on alanine 2. In terms of domain architecture, LisH spans 172-204 (REQEAIRLCLKHFRQHNYTEAFESLQKKTKIAL). In terms of domain architecture, CTLH spans 206–258 (HPMLTDIHDKLVLKGDFDACEELIEKAVNDGLFNQYISQQEYKPRWSQIIPKS). Kelch repeat units follow at residues 284–330 (TVYL…SCHK), 339–391 (QIYT…FDHQ), 408–458 (ILTC…SRIG), 469–515 (CLYV…TGFT), 526–578 (EIHV…SLQE), and 597–651 (VHYL…AQVD).

As to quaternary structure, homodimer; may form higher oligomers. Identified in the CTLH complex that contains GID4, RANBP9 and/or RANBP10, MKLN1, MAEA, RMND5A (or alternatively its paralog RMND5B), GID8, ARMC8, WDR26 and YPEL5. Within this complex, MAEA, RMND5A (or alternatively its paralog RMND5B), GID8, WDR26, and RANBP9 and/or RANBP10 form the catalytic core, while GID4, MKLN1, ARMC8 and YPEL5 have ancillary roles. Interacts with RANBP9. Part of a complex consisting of RANBP9, MKLN1 and GID8. Interacts with GABRA1. Interacts with the C-terminal tail of PTGER3.

The protein localises to the cytoplasm. It is found in the cytosol. The protein resides in the nucleus. It localises to the nucleoplasm. Its subcellular location is the cell projection. The protein localises to the ruffle. It is found in the cell cortex. The protein resides in the synapse. It localises to the postsynapse. Component of the CTLH E3 ubiquitin-protein ligase complex that selectively accepts ubiquitin from UBE2H and mediates ubiquitination and subsequent proteasomal degradation of the transcription factor HBP1. Required for internalization of the GABA receptor GABRA1 from the cell membrane via endosomes and subsequent GABRA1 degradation. Acts as a mediator of cell spreading and cytoskeletal responses to the extracellular matrix component THBS1. The chain is Muskelin (MKLN1) from Homo sapiens (Human).